The chain runs to 363 residues: MMKRKILAAVIPALLAAATANAAEIYNKDGNKLDLYGKAVGRHVWTTTGDSKNADQTYAQIGFKGETQINTDLTGFGQWEYRTKADRAEGEQQNSNLVRLAFAGLKYAEVGSIDYGRNYGIVYDVESYTDMAPYFSGETWGGAYTDNYMTSRAGGLLTYRNSDFFGLVDGLSFGIQYQGKNQDNHSINSQNGDGVGYTMAYEFDGFGVTAAYSNSKRTNDQQDRDGNGDRAESWAVGAKYDANNVYLAAVYAETRNMSIVENTVTDTVEMANKTQNLEVVAQYQFDFGLRPAISYVQSKGKQLNGADGSADLAKYIQAGATYYFNKNMNVWVDYRFNLLDENDYSSSYVGTDDQAAVGITYQF.

Positions Met-1–Ala-22 are cleaved as a signal peptide. The chain crosses the membrane as a beta stranded span at residues Ala-23 to Lys-28. Position 29 (Asp-29) is a topological domain, periplasmic. Residues Gly-30 to Trp-45 traverse the membrane as a beta stranded segment. Topologically, residues Thr-46–Gln-56 are extracellular. Residues Thr-57–Ile-69 form a beta stranded membrane-spanning segment. Over Asn-70–Thr-71 the chain is Periplasmic. Residues Asp-72–Lys-84 form a beta stranded membrane-spanning segment. At Ala-85–Arg-99 the chain is on the extracellular side. A beta stranded membrane pass occupies residues Leu-100–Ala-108. A topological domain (periplasmic) is located at residue Glu-109. Residues Val-110–Arg-117 form a beta stranded membrane-spanning segment. Residues Asn-118–Gly-154 lie on the Extracellular side of the membrane. Residues Gly-155–Asn-161 traverse the membrane as a beta stranded segment. Topologically, residues Ser-162–Asp-169 are periplasmic. A beta stranded membrane pass occupies residues Gly-170–Asn-181. Residues Gln-182–Gly-192 are Extracellular-facing. Residues Asp-193–Phe-203 form a beta stranded membrane-spanning segment. Asp-204 is a topological domain (periplasmic). The beta stranded transmembrane segment at Gly-205–Arg-217 threads the bilayer. At Thr-218–Arg-230 the chain is on the extracellular side. Residues Ala-231 to Ala-242 traverse the membrane as a beta stranded segment. Residue Asn-243 is a topological domain, periplasmic. The chain crosses the membrane as a beta stranded span at residues Asn-244–Asn-256. The Extracellular segment spans residues Met-257 to Asn-272. Residues Lys-273–Phe-285 traverse the membrane as a beta stranded segment. Residues Asp-286–Phe-287 lie on the Periplasmic side of the membrane. The beta stranded transmembrane segment at Gly-288–Lys-301 threads the bilayer. The Extracellular segment spans residues Gln-302 to Leu-312. Residues Ala-313–Phe-324 form a beta stranded membrane-spanning segment. Over Asn-325–Lys-326 the chain is Periplasmic. Residues Asn-327–Phe-336 form a beta stranded membrane-spanning segment. Residues Asn-337–Asp-353 lie on the Extracellular side of the membrane. A beta stranded membrane pass occupies residues Gln-354 to Phe-363.

It belongs to the Gram-negative porin family. Homotrimer. Forms mixed heterotrimers with OmpC and with PhoE; other mixed heterotrimers with other porins are also probable.

It is found in the cell outer membrane. Forms pores that allow passive diffusion of small molecules across the outer membrane. The polypeptide is Outer membrane porin F (ompF) (Salmonella typhi).